A 179-amino-acid chain; its full sequence is uncharacterized protein (179 aa).

This is an uncharacterized protein from Escherichia coli (strain K12).